Here is a 222-residue protein sequence, read N- to C-terminus: Phosphoglycolate phosphatase (222 aa).

Asp-12 functions as the Nucleophile in the catalytic mechanism. 3 residues coordinate Mg(2+): Asp-12, Asp-14, and Asp-175.

This sequence belongs to the HAD-like hydrolase superfamily. CbbY/CbbZ/Gph/YieH family. Mg(2+) serves as cofactor.

It catalyses the reaction 2-phosphoglycolate + H2O = glycolate + phosphate. It participates in organic acid metabolism; glycolate biosynthesis; glycolate from 2-phosphoglycolate: step 1/1. In terms of biological role, specifically catalyzes the dephosphorylation of 2-phosphoglycolate. Is involved in the dissimilation of the intracellular 2-phosphoglycolate formed during the DNA repair of 3'-phosphoglycolate ends, a major class of DNA lesions induced by oxidative stress. In Chromobacterium violaceum (strain ATCC 12472 / DSM 30191 / JCM 1249 / CCUG 213 / NBRC 12614 / NCIMB 9131 / NCTC 9757 / MK), this protein is Phosphoglycolate phosphatase.